The chain runs to 122 residues: Large ribosomal subunit protein bL12 (122 aa).

A disordered region spans residues 96–122 (APKSLKTGLSKDEANEMKKKLEDAGAT). Residues 104–122 (LSKDEANEMKKKLEDAGAT) are compositionally biased toward basic and acidic residues.

The protein belongs to the bacterial ribosomal protein bL12 family. As to quaternary structure, homodimer. Part of the ribosomal stalk of the 50S ribosomal subunit. Forms a multimeric L10(L12)X complex, where L10 forms an elongated spine to which 2 to 4 L12 dimers bind in a sequential fashion. Binds GTP-bound translation factors.

Its function is as follows. Forms part of the ribosomal stalk which helps the ribosome interact with GTP-bound translation factors. Is thus essential for accurate translation. The polypeptide is Large ribosomal subunit protein bL12 (Liberibacter asiaticus (Citrus greening disease)).